The chain runs to 273 residues: Undecaprenyl-diphosphatase (273 aa).

The next 7 membrane-spanning stretches (helical) occupy residues 13–35 (GLVE…VFGN), 45–62 (VFEI…VFEY), 82–102 (FVLN…LFDK), 108–128 (LFNP…ILWV), 186–206 (TEFS…YDVL), 219–239 (LILI…KALL), and 250–270 (FAYY…SGWI).

Belongs to the UppP family.

The protein resides in the cell inner membrane. It catalyses the reaction di-trans,octa-cis-undecaprenyl diphosphate + H2O = di-trans,octa-cis-undecaprenyl phosphate + phosphate + H(+). Catalyzes the dephosphorylation of undecaprenyl diphosphate (UPP). Confers resistance to bacitracin. The protein is Undecaprenyl-diphosphatase of Neisseria gonorrhoeae (strain ATCC 700825 / FA 1090).